We begin with the raw amino-acid sequence, 274 residues long: Remorin 4.2 (274 aa).

The span at 1–30 (MLTLYHQERSPDATSNDRDETPETVVREVH) shows a compositional bias: basic and acidic residues. Disordered stretches follow at residues 1 to 71 (MLTL…EGEN), 117 to 157 (TDHE…TVQR), and 218 to 245 (AMEK…AKRG). Composition is skewed to polar residues over residues 61 to 71 (RSATTMSEGEN) and 145 to 156 (GPGQSRVGSTVQ). Residues 204–239 (MKKIERKLEERKAKAMEKTQNNVAKAQRKAEERRAT) are a coiled coil. Residues 231–245 (RKAEERRATAEAKRG) are compositionally biased toward basic and acidic residues.

The protein belongs to the remorin family. Forms homodimer and heterodimer with REM4.1. Interacts with KIN11. Post-translationally, probably ubiquitinated and degraded by the 26S proteasome pathway. As to expression, predominantly detected in bud, stem, root, flower, silique, and leaves, and enhanced dramatically in senescence leaf.

The protein resides in the cell membrane. In terms of biological role, collaborates with REM4.1 to positively regulate the BCTV and BSCTV susceptibility. The sequence is that of Remorin 4.2 from Arabidopsis thaliana (Mouse-ear cress).